A 216-amino-acid chain; its full sequence is Probable GTP-binding protein EngB (216 aa).

The EngB-type G domain occupies A37–E214. GTP-binding positions include G45–S52, G72–E76, D92–G95, T159–D162, and T193–S195. Mg(2+) is bound by residues S52 and T74.

The protein belongs to the TRAFAC class TrmE-Era-EngA-EngB-Septin-like GTPase superfamily. EngB GTPase family. Requires Mg(2+) as cofactor.

In terms of biological role, necessary for normal cell division and for the maintenance of normal septation. The chain is Probable GTP-binding protein EngB from Rhodopseudomonas palustris (strain BisB18).